The following is a 329-amino-acid chain: DNA-directed RNA polymerase subunit alpha (329 aa).

The tract at residues 1 to 234 (MQGSVTEFLK…EQLDAFVELR (234 aa)) is alpha N-terminal domain (alpha-NTD). The segment at 248–329 (FDPILLRPVD…WPPASLADDL (82 aa)) is alpha C-terminal domain (alpha-CTD).

This sequence belongs to the RNA polymerase alpha chain family. As to quaternary structure, homodimer. The RNAP catalytic core consists of 2 alpha, 1 beta, 1 beta' and 1 omega subunit. When a sigma factor is associated with the core the holoenzyme is formed, which can initiate transcription.

The catalysed reaction is RNA(n) + a ribonucleoside 5'-triphosphate = RNA(n+1) + diphosphate. Functionally, DNA-dependent RNA polymerase catalyzes the transcription of DNA into RNA using the four ribonucleoside triphosphates as substrates. The sequence is that of DNA-directed RNA polymerase subunit alpha from Shewanella loihica (strain ATCC BAA-1088 / PV-4).